A 180-amino-acid chain; its full sequence is Large ribosomal subunit protein uL5 (180 aa).

This sequence belongs to the universal ribosomal protein uL5 family. Part of the 50S ribosomal subunit; part of the 5S rRNA/L5/L18/L25 subcomplex. Contacts the 5S rRNA and the P site tRNA. Forms a bridge to the 30S subunit in the 70S ribosome.

Its function is as follows. This is one of the proteins that bind and probably mediate the attachment of the 5S RNA into the large ribosomal subunit, where it forms part of the central protuberance. In the 70S ribosome it contacts protein S13 of the 30S subunit (bridge B1b), connecting the 2 subunits; this bridge is implicated in subunit movement. Contacts the P site tRNA; the 5S rRNA and some of its associated proteins might help stabilize positioning of ribosome-bound tRNAs. The sequence is that of Large ribosomal subunit protein uL5 from Symbiobacterium thermophilum (strain DSM 24528 / JCM 14929 / IAM 14863 / T).